The primary structure comprises 147 residues: Large ribosomal subunit protein uL13 (147 aa).

The interval Ala-126–Gln-147 is disordered.

It belongs to the universal ribosomal protein uL13 family. As to quaternary structure, part of the 50S ribosomal subunit.

This protein is one of the early assembly proteins of the 50S ribosomal subunit, although it is not seen to bind rRNA by itself. It is important during the early stages of 50S assembly. This is Large ribosomal subunit protein uL13 from Parafrankia sp. (strain EAN1pec).